Here is a 270-residue protein sequence, read N- to C-terminus: Orotidine 5'-phosphate decarboxylase (270 aa).

Lys-89 (proton donor) is an active-site residue.

The protein belongs to the OMP decarboxylase family. Type 2 subfamily.

It catalyses the reaction orotidine 5'-phosphate + H(+) = UMP + CO2. It functions in the pathway pyrimidine metabolism; UMP biosynthesis via de novo pathway; UMP from orotate: step 2/2. In Dehalococcoides mccartyi (strain ATCC BAA-2266 / KCTC 15142 / 195) (Dehalococcoides ethenogenes (strain 195)), this protein is Orotidine 5'-phosphate decarboxylase.